Reading from the N-terminus, the 188-residue chain is Potassium-transporting ATPase KdpC subunit (188 aa).

Residues 13 to 33 (MTAIFWIGCGLAYPLIFTGFA) form a helical membrane-spanning segment.

This sequence belongs to the KdpC family. The system is composed of three essential subunits: KdpA, KdpB and KdpC.

The protein localises to the cell inner membrane. In terms of biological role, part of the high-affinity ATP-driven potassium transport (or Kdp) system, which catalyzes the hydrolysis of ATP coupled with the electrogenic transport of potassium into the cytoplasm. This subunit acts as a catalytic chaperone that increases the ATP-binding affinity of the ATP-hydrolyzing subunit KdpB by the formation of a transient KdpB/KdpC/ATP ternary complex. The polypeptide is Potassium-transporting ATPase KdpC subunit (Gloeobacter violaceus (strain ATCC 29082 / PCC 7421)).